Here is a 263-residue protein sequence, read N- to C-terminus: Proenkephalin-A (263 aa).

The N-terminal stretch at 1–24 is a signal peptide; that stretch reads MARFLGLCTWLLALGPGLLATVRA. 3 disulfide bridges follow: Cys-26–Cys-48, Cys-30–Cys-52, and Cys-33–Cys-65. 2 consecutive propeptides follow at residues 192–203 and 213–223; these read SPHLEDETKELQ and VGRPEWWMDYQ. The residue at position 247 (Ser-247) is a Phosphoserine.

The protein belongs to the opioid neuropeptide precursor family. In terms of processing, proenkephalin-A is cleaved by CTSL to generate Met-enkephalin. Post-translationally, processed and degraded by ACE. Probably cleaved by ACE. In terms of processing, processed by ACE to generate Met-enkephalin in the nucleus accumbens of the brain. Post-translationally, the N-terminal domain contains 6 conserved cysteines thought to be involved in disulfide bonding and/or processing. In terms of tissue distribution, secreted by neuroendocrine chromaffin cells through cromaffin granules.

The protein resides in the cytoplasmic vesicle. Its subcellular location is the secretory vesicle. It localises to the chromaffin granule lumen. The protein localises to the secreted. Neuropeptide that competes with and mimic the effects of opiate drugs. They play a role in a number of physiologic functions, including pain perception and responses to stress. Functionally, met-enkephalin-Arg-Phe neuropeptide acts as a strong ligand of Mu-type opioid receptor OPRM1. Met-enkephalin-Arg-Phe-binding to OPRM1 in the nucleus accumbens of the brain increases activation of OPRM1, leading to long-term synaptic depression of glutamate release. In terms of biological role, increases glutamate release in the striatum and decreases GABA concentration in the striatum. Its function is as follows. Increases glutamate release in the striatum. Enkelytin possesses antibacterial activity against Gram-positive bacteria such as Micrococcus luteus and Bacillus megaterium. The chain is Proenkephalin-A (PENK) from Bos taurus (Bovine).